The sequence spans 77 residues: Acyl carrier protein (77 aa).

In terms of domain architecture, Carrier spans 2–77 (AEVFDRVKEI…DAVDYINSKA (76 aa)). O-(pantetheine 4'-phosphoryl)serine is present on serine 37.

The protein belongs to the acyl carrier protein (ACP) family. Post-translationally, 4'-phosphopantetheine is transferred from CoA to a specific serine of apo-ACP by AcpS. This modification is essential for activity because fatty acids are bound in thioester linkage to the sulfhydryl of the prosthetic group.

Its subcellular location is the cytoplasm. It participates in lipid metabolism; fatty acid biosynthesis. In terms of biological role, carrier of the growing fatty acid chain in fatty acid biosynthesis. This is Acyl carrier protein from Oceanobacillus iheyensis (strain DSM 14371 / CIP 107618 / JCM 11309 / KCTC 3954 / HTE831).